We begin with the raw amino-acid sequence, 280 residues long: Large ribosomal subunit protein uL2 (280 aa).

The tract at residues 229–280 (DHPHGGGEGKAPIGHPSPLTPWGKPTLGYKTRKKRKPSDRFIIQRANDKKEK) is disordered.

It belongs to the universal ribosomal protein uL2 family. In terms of assembly, part of the 50S ribosomal subunit. Forms a bridge to the 30S subunit in the 70S ribosome.

Functionally, one of the primary rRNA binding proteins. Required for association of the 30S and 50S subunits to form the 70S ribosome, for tRNA binding and peptide bond formation. It has been suggested to have peptidyltransferase activity; this is somewhat controversial. Makes several contacts with the 16S rRNA in the 70S ribosome. This Dictyoglomus turgidum (strain DSM 6724 / Z-1310) protein is Large ribosomal subunit protein uL2.